The following is a 150-amino-acid chain: Propanediol utilization protein PduV (150 aa).

Residues Met-1 to Asp-42 are targets protein to the BMC. A GTP-binding site is contributed by Gly-8–Thr-15.

Belongs to the EutP/PduV family. In terms of assembly, interacts with PduU, probably via the PduU beta-barrel which is predicted by modeling to be on the exterior of the BMC.

It is found in the bacterial microcompartment. Its pathway is polyol metabolism; 1,2-propanediol degradation. Functionally, may play a role in the spatial distribution of the bacterial microcompartment (BMC) dedicated to 1,2-PD degradation, perhaps being involved in cytoskeleton dynamics; might bind GTP. This subunit is directly targeted to the BMC. In terms of biological role, expression of a cosmid containing the full 21-gene pdu operon in E.coli allows E.coli to grow on 1,2-propanediol (1,2-PD) with the appearance of bacterial microcompartments (BMC) in its cytoplasm. The 1,2-PD-specific bacterial microcompartment (BMC) concentrates low levels of 1,2-PD catabolic enzymes, concentrates volatile reaction intermediates thus enhancing pathway flux and keeps the level of toxic, mutagenic propionaldehyde low. This is Propanediol utilization protein PduV from Citrobacter freundii.